The sequence spans 268 residues: Undecaprenyl-diphosphatase (268 aa).

7 helical membrane-spanning segments follow: residues 47–67 (FTVL…FAKL), 83–103 (FVIG…IAGK), 109–129 (LFNP…LMWV), 144–164 (FPLP…IPGV), 184–204 (AAEF…AYDF), 218–238 (TVAI…KAFL), and 246–266 (FTFF…ALAL).

It belongs to the UppP family.

Its subcellular location is the cell inner membrane. The catalysed reaction is di-trans,octa-cis-undecaprenyl diphosphate + H2O = di-trans,octa-cis-undecaprenyl phosphate + phosphate + H(+). Catalyzes the dephosphorylation of undecaprenyl diphosphate (UPP). Confers resistance to bacitracin. This chain is Undecaprenyl-diphosphatase, found in Nitrobacter winogradskyi (strain ATCC 25391 / DSM 10237 / CIP 104748 / NCIMB 11846 / Nb-255).